The chain runs to 345 residues: Dihydroorotase (345 aa).

Residues His13 and His15 each coordinate Zn(2+). Residues 15 to 17 and Asn41 contribute to the substrate site; that span reads HLR. Zn(2+) is bound by residues Lys99, His136, His174, and Asp247. N6-carboxylysine is present on Lys99. His136 lines the substrate pocket. Asp247 is an active-site residue. Substrate is bound by residues His251 and Ala263.

Belongs to the metallo-dependent hydrolases superfamily. DHOase family. Class II DHOase subfamily. In terms of assembly, homodimer. It depends on Zn(2+) as a cofactor.

The catalysed reaction is (S)-dihydroorotate + H2O = N-carbamoyl-L-aspartate + H(+). It functions in the pathway pyrimidine metabolism; UMP biosynthesis via de novo pathway; (S)-dihydroorotate from bicarbonate: step 3/3. Its function is as follows. Catalyzes the reversible cyclization of carbamoyl aspartate to dihydroorotate. This is Dihydroorotase from Halorhodospira halophila (strain DSM 244 / SL1) (Ectothiorhodospira halophila (strain DSM 244 / SL1)).